We begin with the raw amino-acid sequence, 105 residues long: Met repressor (105 aa).

It belongs to the MetJ family. Homodimer.

Its subcellular location is the cytoplasm. This regulatory protein, when combined with SAM (S-adenosylmethionine) represses the expression of the methionine regulon and of enzymes involved in SAM synthesis. The polypeptide is Met repressor (Proteus mirabilis (strain HI4320)).